The following is a 209-amino-acid chain: SelT-like protein (209 aa).

The first 22 residues, 1–22 (MDKTQLILLGLPIFLLCSDLFN), serve as a signal peptide directing secretion. Cysteines 64 and 67 form a disulfide.

This sequence belongs to the SelWTH family. SELT subfamily.

The sequence is that of SelT-like protein from Arabidopsis thaliana (Mouse-ear cress).